The primary structure comprises 189 residues: MDQLQQSLLEAPIIEKDGYHYFVHPISDGVPMLEPNLLREIVIKIIRKAQLENVDKIVTPAAMGIHISTAVSLMTDIPLVVIRKREYGLDGETPLFQQTGYSENQMYINDVDEGDSVLVLDDVLSTGGTLSAICSALEDIGADIVDVVAVIKKVGGENELESSPYSAKTLINVDVEDGEVVIIDSNGDN.

This sequence belongs to the purine/pyrimidine phosphoribosyltransferase family. Archaeal HPRT subfamily.

In terms of biological role, may catalyze a purine salvage reaction, the substrate is unknown. This chain is HGPRTase-like protein, found in Natronomonas pharaonis (strain ATCC 35678 / DSM 2160 / CIP 103997 / JCM 8858 / NBRC 14720 / NCIMB 2260 / Gabara) (Halobacterium pharaonis).